The primary structure comprises 375 residues: Trichodiene synthase (375 aa).

This sequence belongs to the trichodiene synthase family.

The enzyme catalyses (2E,6E)-farnesyl diphosphate = trichodiene + diphosphate. It participates in sesquiterpene biosynthesis; trichothecene biosynthesis. Functionally, TS is a member of the terpene cyclase group of enzymes. It catalyzes the isomerization and cyclization of farnesyl pyro-phosphate to form trichodiene, the first cyclic intermediate in the biosynthetic pathway for trichothecenes. It serves to branch trichothecene biosynthesis from the isoprenoid pathway. In Fusarium cortaderiae, this protein is Trichodiene synthase (TRI5).